We begin with the raw amino-acid sequence, 180 residues long: ATP synthase subunit delta (180 aa).

The protein belongs to the ATPase delta chain family. As to quaternary structure, F-type ATPases have 2 components, F(1) - the catalytic core - and F(0) - the membrane proton channel. F(1) has five subunits: alpha(3), beta(3), gamma(1), delta(1), epsilon(1). CF(0) has four main subunits: a(1), b(1), b'(1) and c(10-14). The alpha and beta chains form an alternating ring which encloses part of the gamma chain. F(1) is attached to F(0) by a central stalk formed by the gamma and epsilon chains, while a peripheral stalk is formed by the delta, b and b' chains.

It localises to the cellular thylakoid membrane. Its function is as follows. F(1)F(0) ATP synthase produces ATP from ADP in the presence of a proton or sodium gradient. F-type ATPases consist of two structural domains, F(1) containing the extramembraneous catalytic core and F(0) containing the membrane proton channel, linked together by a central stalk and a peripheral stalk. During catalysis, ATP synthesis in the catalytic domain of F(1) is coupled via a rotary mechanism of the central stalk subunits to proton translocation. This protein is part of the stalk that links CF(0) to CF(1). It either transmits conformational changes from CF(0) to CF(1) or is implicated in proton conduction. This Prochlorococcus marinus (strain MIT 9215) protein is ATP synthase subunit delta.